Reading from the N-terminus, the 252-residue chain is MLKRIISARYIRNMSSGASLVEKAKKSAAYQAVDENFPEGAKVVGVGSGSTVIYVAERISQLKNKESFVCVPTGFQSKQLIIDAGLRLGTIEQYPEVDIAFDGADEVDTELNLIKGGGACLFQEKLVAAAASKFVIVADFRKRSPSKLGIQWRKGVPIEIVPCAYAKVSKDLEAMGAKKVELRQGGSAKAGPVVTDNNNFLIDADFGEIEDPAKLHTDIKQLVGVVETGLFVQMAYKTYFGEESGEVKCWSK.

Belongs to the ribose 5-phosphate isomerase family.

The protein localises to the cytoplasm. It carries out the reaction aldehydo-D-ribose 5-phosphate = D-ribulose 5-phosphate. The protein operates within carbohydrate degradation; pentose phosphate pathway; D-ribose 5-phosphate from D-ribulose 5-phosphate (non-oxidative stage): step 1/1. The sequence is that of Ribose-5-phosphate isomerase (RKI1) from Debaryomyces hansenii (strain ATCC 36239 / CBS 767 / BCRC 21394 / JCM 1990 / NBRC 0083 / IGC 2968) (Yeast).